A 99-amino-acid chain; its full sequence is Aspartyl/glutamyl-tRNA(Asn/Gln) amidotransferase subunit C (99 aa).

Belongs to the GatC family. Heterotrimer of A, B and C subunits.

It carries out the reaction L-glutamyl-tRNA(Gln) + L-glutamine + ATP + H2O = L-glutaminyl-tRNA(Gln) + L-glutamate + ADP + phosphate + H(+). It catalyses the reaction L-aspartyl-tRNA(Asn) + L-glutamine + ATP + H2O = L-asparaginyl-tRNA(Asn) + L-glutamate + ADP + phosphate + 2 H(+). Functionally, allows the formation of correctly charged Asn-tRNA(Asn) or Gln-tRNA(Gln) through the transamidation of misacylated Asp-tRNA(Asn) or Glu-tRNA(Gln) in organisms which lack either or both of asparaginyl-tRNA or glutaminyl-tRNA synthetases. The reaction takes place in the presence of glutamine and ATP through an activated phospho-Asp-tRNA(Asn) or phospho-Glu-tRNA(Gln). This is Aspartyl/glutamyl-tRNA(Asn/Gln) amidotransferase subunit C from Cupriavidus metallidurans (strain ATCC 43123 / DSM 2839 / NBRC 102507 / CH34) (Ralstonia metallidurans).